Consider the following 118-residue polypeptide: Transmembrane protein 243 (118 aa).

Position 1 is an N-acetylmethionine (Met-1). 3 helical membrane-spanning segments follow: residues 32 to 52, 62 to 82, and 94 to 114; these read LVVG…AFVF, IFFA…IYWY, and LIYY…LYFH.

The protein belongs to the TMEM243 family. In terms of tissue distribution, widely expressed.

The protein localises to the membrane. In Homo sapiens (Human), this protein is Transmembrane protein 243 (TMEM243).